Here is a 254-residue protein sequence, read N- to C-terminus: uncharacterized protein (254 aa).

This is an uncharacterized protein from Methanocaldococcus jannaschii (strain ATCC 43067 / DSM 2661 / JAL-1 / JCM 10045 / NBRC 100440) (Methanococcus jannaschii).